Here is a 172-residue protein sequence, read N- to C-terminus: Crossover junction endodeoxyribonuclease RuvC (172 aa).

Catalysis depends on residues Asp7, Glu68, and Asp140. Mg(2+) is bound by residues Asp7, Glu68, and Asp140.

The protein belongs to the RuvC family. In terms of assembly, homodimer which binds Holliday junction (HJ) DNA. The HJ becomes 2-fold symmetrical on binding to RuvC with unstacked arms; it has a different conformation from HJ DNA in complex with RuvA. In the full resolvosome a probable DNA-RuvA(4)-RuvB(12)-RuvC(2) complex forms which resolves the HJ. Mg(2+) is required as a cofactor.

It localises to the cytoplasm. The catalysed reaction is Endonucleolytic cleavage at a junction such as a reciprocal single-stranded crossover between two homologous DNA duplexes (Holliday junction).. Its function is as follows. The RuvA-RuvB-RuvC complex processes Holliday junction (HJ) DNA during genetic recombination and DNA repair. Endonuclease that resolves HJ intermediates. Cleaves cruciform DNA by making single-stranded nicks across the HJ at symmetrical positions within the homologous arms, yielding a 5'-phosphate and a 3'-hydroxyl group; requires a central core of homology in the junction. The consensus cleavage sequence is 5'-(A/T)TT(C/G)-3'. Cleavage occurs on the 3'-side of the TT dinucleotide at the point of strand exchange. HJ branch migration catalyzed by RuvA-RuvB allows RuvC to scan DNA until it finds its consensus sequence, where it cleaves and resolves the cruciform DNA. This chain is Crossover junction endodeoxyribonuclease RuvC, found in Polynucleobacter asymbioticus (strain DSM 18221 / CIP 109841 / QLW-P1DMWA-1) (Polynucleobacter necessarius subsp. asymbioticus).